A 532-amino-acid chain; its full sequence is Type 2 DNA topoisomerase 6 subunit B (532 aa).

ATP contacts are provided by residues N41, D75, 96-97 (SK), 105-112 (GMYGLGVK), and K427.

This sequence belongs to the TOP6B family. As to quaternary structure, homodimer. Heterotetramer of two Top6A and two Top6B chains.

The catalysed reaction is ATP-dependent breakage, passage and rejoining of double-stranded DNA.. Relaxes both positive and negative superturns and exhibits a strong decatenase activity. The sequence is that of Type 2 DNA topoisomerase 6 subunit B from Sulfurisphaera tokodaii (strain DSM 16993 / JCM 10545 / NBRC 100140 / 7) (Sulfolobus tokodaii).